The primary structure comprises 239 residues: Diablo IAP-binding mitochondrial protein (239 aa).

The transit peptide at Met1 to Leu22 directs the protein to the mitochondrion. Residues Ala56–Ala60 carry the IAP-binding motif. A disordered region spans residues Arg217–Asp239.

The protein belongs to the Smac/DIABLO protein family. Homodimer. Interacts with BEX3. Interacts with BIRC2/c-IAP1 (via BIR3 domain). Interacts with BIRC6/BRUCE. Interacts with BIRC7/livin. Interacts with XIAP/BIRC4 (via BIR3 domain). Interacts with the monomeric and dimeric form of BIRC5/survivin. Interacts with AREL1 (via HECT domain); in the cytoplasm following induction of apoptosis. Post-translationally, ubiquitinated by BIRC7/livin. Ubiquitinated by BIRC6. In terms of processing, the precursor form is proteolytically cleaved by mitochondrial processing peptidase MPP to remove the transit peptide and produce an intermediate form. This is then processed by PARL to produce the mature cleaved form which is released from mitochondria into the cytosol in apoptotic cells.

The protein resides in the mitochondrion. It localises to the cytoplasm. It is found in the cytosol. Functionally, promotes apoptosis by activating caspases in the cytochrome c/Apaf-1/caspase-9 pathway. Acts by opposing the inhibitory activity of inhibitor of apoptosis proteins (IAP). Inhibits the activity of BIRC6/BRUCE by inhibiting its binding to caspases. This is Diablo IAP-binding mitochondrial protein from Pongo abelii (Sumatran orangutan).